The primary structure comprises 337 residues: DNA-directed RNA polymerase subunit alpha (337 aa).

Residues 1-233 (MVREKVRVST…DLFIPFLHAE (233 aa)) are alpha N-terminal domain (alpha-NTD). An alpha C-terminal domain (alpha-CTD) region spans residues 267–337 (IALKSIFIDQ…KAFHNPFTEE (71 aa)).

The protein belongs to the RNA polymerase alpha chain family. As to quaternary structure, in plastids the minimal PEP RNA polymerase catalytic core is composed of four subunits: alpha, beta, beta', and beta''. When a (nuclear-encoded) sigma factor is associated with the core the holoenzyme is formed, which can initiate transcription.

Its subcellular location is the plastid. The protein resides in the chloroplast. It catalyses the reaction RNA(n) + a ribonucleoside 5'-triphosphate = RNA(n+1) + diphosphate. Functionally, DNA-dependent RNA polymerase catalyzes the transcription of DNA into RNA using the four ribonucleoside triphosphates as substrates. In Eucalyptus globulus subsp. globulus (Tasmanian blue gum), this protein is DNA-directed RNA polymerase subunit alpha.